The primary structure comprises 81 residues: Conotoxin Vc6.13 (81 aa).

Positions 1 to 19 (MEKLTILLLVAAVLMSIQA) are cleaved as a signal peptide. Residues 20–44 (LNQEQHQRAKINLLSKRKAPAERWW) constitute a propeptide that is removed on maturation. Intrachain disulfides connect Cys49–Cys63, Cys56–Cys67, and Cys62–Cys72.

The protein belongs to the conotoxin O2 superfamily. Expressed by the venom duct.

The protein localises to the secreted. In terms of biological role, inhibits voltage-gated ion channels. The chain is Conotoxin Vc6.13 from Conus victoriae (Queen Victoria cone).